Here is a 706-residue protein sequence, read N- to C-terminus: Polyribonucleotide nucleotidyltransferase (706 aa).

Mg(2+) is bound by residues D486 and D492. The 60-residue stretch at 553 to 612 folds into the KH domain; the sequence is PRIHTIKISTDKIKDVIGKGGSVIRALTEETGTTIEIEDDGTVRIASTDGEKAKHAIRRI. The S1 motif domain occupies 622–690; that stretch reads GRVYQGKVTR…RQGRVRLSIK (69 aa).

This sequence belongs to the polyribonucleotide nucleotidyltransferase family. Component of the RNA degradosome, which is a multiprotein complex involved in RNA processing and mRNA degradation. Mg(2+) is required as a cofactor.

The protein localises to the cytoplasm. It carries out the reaction RNA(n+1) + phosphate = RNA(n) + a ribonucleoside 5'-diphosphate. Functionally, involved in mRNA degradation. Catalyzes the phosphorolysis of single-stranded polyribonucleotides processively in the 3'- to 5'-direction. In Pectobacterium atrosepticum (strain SCRI 1043 / ATCC BAA-672) (Erwinia carotovora subsp. atroseptica), this protein is Polyribonucleotide nucleotidyltransferase.